A 364-amino-acid chain; its full sequence is DNA replication and repair protein RecF (364 aa).

30 to 37 (GNNGQGKT) is a binding site for ATP.

Belongs to the RecF family.

It is found in the cytoplasm. The RecF protein is involved in DNA metabolism; it is required for DNA replication and normal SOS inducibility. RecF binds preferentially to single-stranded, linear DNA. It also seems to bind ATP. This Citrifermentans bemidjiense (strain ATCC BAA-1014 / DSM 16622 / JCM 12645 / Bem) (Geobacter bemidjiensis) protein is DNA replication and repair protein RecF.